Here is a 304-residue protein sequence, read N- to C-terminus: Thyroxine 5-deiodinase (304 aa).

The segment at 1–22 (MPRQAASRLVVGEGEGPPGASG) is disordered. Topologically, residues 1 to 42 (MPRQAASRLVVGEGEGPPGASGPAATMLRSLLLHSLRLCAQT) are cytoplasmic. A helical; Signal-anchor for type II membrane protein membrane pass occupies residues 43 to 62 (ASCLVLFPRFLGTAFMLWLL). Topologically, residues 63-304 (DFLCIRKHFL…QLHGTRPRRL (242 aa)) are extracellular. Sec-170 is a catalytic residue. A non-standard amino acid (selenocysteine) is located at residue Sec-170.

It belongs to the iodothyronine deiodinase family. In terms of assembly, monomer. Homodimer. May undergo minor heretodimerization with DIO1 and DIO2. In terms of tissue distribution, neonatal skin, placenta, skeletal muscle and cerebral cortex.

Its subcellular location is the cell membrane. It is found in the endosome membrane. It catalyses the reaction 3,3',5'-triiodo-L-thyronine + iodide + A + H(+) = L-thyroxine + AH2. The catalysed reaction is 3,3'-diiodo-L-thyronine + iodide + A + H(+) = 3,3',5-triiodo-L-thyronine + AH2. The enzyme catalyses 3-iodo-L-thyronine + iodide + A + H(+) = 3,5-diiodo-L-thyronine + AH2. It carries out the reaction L-thyronine + iodide + A + H(+) = 3-iodo-L-thyronine + AH2. It catalyses the reaction 3',5'-diiodo-L-thyronine + iodide + A + H(+) = 3,3',5'-triiodo-L-thyronine + AH2. The catalysed reaction is 3'-iodo-L-thyronine + iodide + A + H(+) = 3,3'-diiodo-L-thyronine + AH2. The enzyme catalyses 3,3',5'-triiodothyronamine + iodide + A + H(+) = 3,3',5,5'-tetraiodothyronamine + AH2. It carries out the reaction 3',5'-diiodothyronamine + iodide + A + H(+) = 3,3',5'-triiodothyronamine + AH2. It catalyses the reaction 3,3'-diiodothyronamine + iodide + A + H(+) = 3,3',5-triiodothyronamine + AH2. The catalysed reaction is 3-iodothyronamine + iodide + A + H(+) = 3,5-diiodothyronamine + AH2. The enzyme catalyses 3'-iodothyronamine + iodide + A + H(+) = 3,3'-diiodothyronamine + AH2. It carries out the reaction thyronamine + iodide + A + H(+) = 3-iodothyronamine + AH2. In terms of biological role, plays a crucial role in the metabolism of thyroid hormones (TH) and has specific roles in TH activation and inactivation by deiodination. Catalyzes the deiodination of L-thyroxine (T4) to 3,3',5'-triiodothyronine (rT3), 3,5-diiodothyronine (3,5-T2) to 3-monoiodothyronine (3-T1), rT3 to 3',5'-diiodothyronine (3',5'-T2) and 3,3'-diiodothyronine (3,3'-T2) to 3'-monoiodothyronine (3'-T1) via inner-ring deiodination (IRD). Catalyzes the deiodination of 3,5,3'-triiodothyronine (T3) to 3,3'-diiodothyronine (3,3'-T2) via IRD. Catalyzes the deiodination of 3-T1 to L-thyronine (T0) via outer-ring deiodination (ORD). Catalyzes the tyrosyl ring deiodinations of T4AM (3,3',5,5'-tetraiodothyronamine), rT3AM (3,3',5'-triiodothyronamine), T3AM (3,5,3'-triiodothyronamine), 3,5-T2AM (3,5-diiodothyronamine), 3,3'-T2AM (3,3'-diiodothyronamine) and 3-T1AM (3-iodothyronamine). The chain is Thyroxine 5-deiodinase (Dio3) from Rattus norvegicus (Rat).